A 159-amino-acid polypeptide reads, in one-letter code: 6,7-dimethyl-8-ribityllumazine synthase (159 aa).

Residues Trp26, 58 to 60, and 80 to 82 contribute to the 5-amino-6-(D-ribitylamino)uracil site; these read AIE and VVI. 85-86 is a binding site for (2S)-2-hydroxy-3-oxobutyl phosphate; the sequence is ET. Residue His88 is the Proton donor of the active site. Asn113 is a 5-amino-6-(D-ribitylamino)uracil binding site. Residue Arg127 coordinates (2S)-2-hydroxy-3-oxobutyl phosphate.

This sequence belongs to the DMRL synthase family. As to quaternary structure, homopentamer.

The catalysed reaction is (2S)-2-hydroxy-3-oxobutyl phosphate + 5-amino-6-(D-ribitylamino)uracil = 6,7-dimethyl-8-(1-D-ribityl)lumazine + phosphate + 2 H2O + H(+). Its pathway is cofactor biosynthesis; riboflavin biosynthesis; riboflavin from 2-hydroxy-3-oxobutyl phosphate and 5-amino-6-(D-ribitylamino)uracil: step 1/2. Its function is as follows. Catalyzes the formation of 6,7-dimethyl-8-ribityllumazine by condensation of 5-amino-6-(D-ribitylamino)uracil with 3,4-dihydroxy-2-butanone 4-phosphate. This is the penultimate step in the biosynthesis of riboflavin. The protein is 6,7-dimethyl-8-ribityllumazine synthase of Mycolicibacterium gilvum (strain PYR-GCK) (Mycobacterium gilvum (strain PYR-GCK)).